Here is a 152-residue protein sequence, read N- to C-terminus: Superoxide dismutase [Cu-Zn] (152 aa).

H45, H47, and H62 together coordinate Cu cation. A disulfide bridge links C56 with C145. H62, H70, H79, and D82 together coordinate Zn(2+). H119 serves as a coordination point for Cu cation.

The protein belongs to the Cu-Zn superoxide dismutase family. Homodimer. Requires Cu cation as cofactor. Zn(2+) is required as a cofactor.

The protein localises to the cytoplasm. It carries out the reaction 2 superoxide + 2 H(+) = H2O2 + O2. Functionally, destroys radicals which are normally produced within the cells and which are toxic to biological systems. The protein is Superoxide dismutase [Cu-Zn] (SODCC) of Carica papaya (Papaya).